We begin with the raw amino-acid sequence, 158 residues long: Small ribosomal subunit protein uS7 (158 aa).

It belongs to the universal ribosomal protein uS7 family. As to quaternary structure, part of the 30S ribosomal subunit. Contacts proteins S9 and S11.

One of the primary rRNA binding proteins, it binds directly to 16S rRNA where it nucleates assembly of the head domain of the 30S subunit. Is located at the subunit interface close to the decoding center, probably blocks exit of the E-site tRNA. This chain is Small ribosomal subunit protein uS7, found in Phocaeicola vulgatus (strain ATCC 8482 / DSM 1447 / JCM 5826 / CCUG 4940 / NBRC 14291 / NCTC 11154) (Bacteroides vulgatus).